The primary structure comprises 132 residues: Agouti-signaling protein (132 aa).

An N-terminal signal peptide occupies residues 1-22 (MDVTRLVLATLLVFLCFFAAYS). Asparagine 39 carries an N-linked (GlcNAc...) asparagine glycan. Residues 60–93 (KKISRKEAEKRRSSKKEASKQKVARPRTPLSVPC) are disordered. Residues 64–79 (RKEAEKRRSSKKEASK) show a composition bias toward basic and acidic residues. Intrachain disulfides connect cysteine 93-cysteine 108, cysteine 100-cysteine 114, cysteine 107-cysteine 125, cysteine 111-cysteine 132, and cysteine 116-cysteine 123. Residues 93-132 (CVSTRGSCKPPAPACCHPCASCQCRFFRSACSCRVLNVNC) enclose the Agouti domain.

It is found in the secreted. Functionally, involved in the regulation of melanogenesis. The binding of ASP to MC1R precludes alpha-MSH initiated signaling and thus blocks production of cAMP, leading to a down-regulation of eumelanogenesis (brown/black pigment) and thus increasing synthesis of pheomelanin (yellow/red pigment). The polypeptide is Agouti-signaling protein (ASIP) (Cebuella pygmaea (Pygmy marmoset)).